Reading from the N-terminus, the 451-residue chain is Signal transduction histidine-protein kinase ArlS (451 aa).

2 consecutive transmembrane segments (helical) span residues 11–31 (IIVT…IIIF) and 156–176 (IIAL…SYVF). One can recognise an HAMP domain in the interval 178-231 (TQITKPLVSLSNKMIEIRRDGFQNKLQLNTNYEEIDNLANTFNEMMSQIEESFN). The Histidine kinase domain maps to 239-451 (DASHELRTPL…NKGTTFKIIF (213 aa)). Residue His242 is modified to Phosphohistidine; by autocatalysis.

Autophosphorylated.

The protein localises to the cell membrane. It catalyses the reaction ATP + protein L-histidine = ADP + protein N-phospho-L-histidine.. Functionally, member of the two-component regulatory system ArlS/ArlR involved in the regulation of adhesion, autolysis, multidrug resistance and virulence. ArlS probably functions as a sensor protein kinase which is autophosphorylated at a histidine residue and transfers its phosphate group to ArlR. The sequence is that of Signal transduction histidine-protein kinase ArlS (arlS) from Staphylococcus aureus (strain MRSA252).